The following is a 995-amino-acid chain: Protein translocase subunit SecA (995 aa).

Residues Gln86, Gly104–Thr108, and Asp535 each bind ATP. The interval Ala883 to Leu911 is disordered. Residues Cys912, Cys914, Cys923, and His924 each coordinate Zn(2+). A disordered region spans residues Pro939 to Arg995. Positions Ala957 to Ile969 are enriched in low complexity.

It belongs to the SecA family. Monomer and homodimer. Part of the essential Sec protein translocation apparatus which comprises SecA, SecYEG and auxiliary proteins SecDF. Other proteins may also be involved. It depends on Zn(2+) as a cofactor.

Its subcellular location is the cell membrane. The protein resides in the cytoplasm. The catalysed reaction is ATP + H2O + cellular proteinSide 1 = ADP + phosphate + cellular proteinSide 2.. Part of the Sec protein translocase complex. Interacts with the SecYEG preprotein conducting channel. Has a central role in coupling the hydrolysis of ATP to the transfer of proteins into and across the cell membrane, serving as an ATP-driven molecular motor driving the stepwise translocation of polypeptide chains across the membrane. In Chloroflexus aurantiacus (strain ATCC 29366 / DSM 635 / J-10-fl), this protein is Protein translocase subunit SecA.